A 483-amino-acid chain; its full sequence is Phosphoenolpyruvate carboxylase (483 aa).

Positions 1 to 20 are disordered; it reads MKVPRCMSTQHPDNVNPPFF.

Belongs to the PEPCase type 2 family. In terms of assembly, homotetramer. Requires Mg(2+) as cofactor.

It carries out the reaction oxaloacetate + phosphate = phosphoenolpyruvate + hydrogencarbonate. With respect to regulation, inhibited by NaCl, KCl, ATP, ADP, GTP and aspartate. Unlike E.coli, not regulated by acetyl-CoA. In terms of biological role, catalyzes the irreversible beta-carboxylation of phosphoenolpyruvate (PEP) to form oxaloacetate (OAA), a four-carbon dicarboxylic acid source for the tricarboxylic acid cycle. The sequence is that of Phosphoenolpyruvate carboxylase (ppcA) from Methanothermobacter thermautotrophicus (strain ATCC 29096 / DSM 1053 / JCM 10044 / NBRC 100330 / Delta H) (Methanobacterium thermoautotrophicum).